The following is a 343-amino-acid chain: MARVRVGVNGFGTIGKRVAEAIMLQPDMELVGVTKTKPDYTAKYAVSRGIPVYVPKESLEEFQAKGIEPAGTIEELLEKVDVIVDATPGGTGRKYKPLYEKAGVKMIFQGGEKADIAELSFSTLCNYEQALGKTSLRVVSCNTTGLLRAICSISRLAPVRRVRATIVRRAADPKEIKRGPVNAIKPDPVKTPSHHALDVKTVLPDLDIVTMAVVVPTTLMHVHIVYAELEKPVTREDVVATFESTPRILLADASYGLASTAELVEYARDLGRKRYDIPELIVWLDSIAVNGVEVMWMQAVHQEAIVVPENIDAIRAVAELAKTAEETIRITDERLGLLKGRIP.

NAD(+) contacts are provided by residues Thr-13–Ile-14 and Gly-111. D-glyceraldehyde 3-phosphate is bound at residue Ser-140–Asn-142. Cys-141 serves as the catalytic Nucleophile. Arg-169 provides a ligand contact to NAD(+). Residue His-195–Ala-196 coordinates D-glyceraldehyde 3-phosphate. Gln-302 contributes to the NAD(+) binding site.

It belongs to the glyceraldehyde-3-phosphate dehydrogenase family. As to quaternary structure, homotetramer.

It localises to the cytoplasm. It carries out the reaction D-glyceraldehyde 3-phosphate + phosphate + NADP(+) = (2R)-3-phospho-glyceroyl phosphate + NADPH + H(+). It catalyses the reaction D-glyceraldehyde 3-phosphate + phosphate + NAD(+) = (2R)-3-phospho-glyceroyl phosphate + NADH + H(+). It participates in carbohydrate degradation; glycolysis; pyruvate from D-glyceraldehyde 3-phosphate: step 1/5. In Hyperthermus butylicus (strain DSM 5456 / JCM 9403 / PLM1-5), this protein is Glyceraldehyde-3-phosphate dehydrogenase.